The primary structure comprises 114 residues: N(4)-acetylcytidine amidohydrolase (114 aa).

The 86-residue stretch at 8–93 (TFFEFLTPLV…ALIQEIYPNI (86 aa)) folds into the ASCH domain. Lys22 functions as the Proton acceptor in the catalytic mechanism. The active-site Nucleophile is the Thr25. The active-site Proton donor is the Glu75.

Belongs to the N(4)-acetylcytidine amidohydrolase family.

It carries out the reaction N(4)-acetylcytidine + H2O = cytidine + acetate + H(+). It catalyses the reaction N(4)-acetyl-2'-deoxycytidine + H2O = 2'-deoxycytidine + acetate + H(+). The enzyme catalyses N(4)-acetylcytosine + H2O = cytosine + acetate + H(+). Catalyzes the hydrolysis of N(4)-acetylcytidine (ac4C). The sequence is that of N(4)-acetylcytidine amidohydrolase from Vibrio cholerae serotype O1 (strain ATCC 39541 / Classical Ogawa 395 / O395).